A 547-amino-acid polypeptide reads, in one-letter code: Chaperonin GroEL 1 (547 aa).

Residues threonine 30–proline 33, lysine 51, aspartate 87–threonine 91, glycine 415, asparagine 479–alanine 481, and aspartate 495 contribute to the ATP site. A disordered region spans residues proline 525–tyrosine 547. Gly residues predominate over residues proline 531–glycine 541.

The protein belongs to the chaperonin (HSP60) family. In terms of assembly, forms a cylinder of 14 subunits composed of two heptameric rings stacked back-to-back. Interacts with the co-chaperonin GroES.

The protein resides in the cytoplasm. The enzyme catalyses ATP + H2O + a folded polypeptide = ADP + phosphate + an unfolded polypeptide.. Together with its co-chaperonin GroES, plays an essential role in assisting protein folding. The GroEL-GroES system forms a nano-cage that allows encapsulation of the non-native substrate proteins and provides a physical environment optimized to promote and accelerate protein folding. The polypeptide is Chaperonin GroEL 1 (Anaeromyxobacter sp. (strain Fw109-5)).